The sequence spans 227 residues: Lectin (227 aa).

A signal peptide spans M1 to A28. Q29 carries the pyrrolidone carboxylic acid modification. Chitin-binding type-1 domains are found at residues Q29–S70, S71–A113, D114–P156, and E157–K199. 16 disulfides stabilise this stretch: C31–C46, C40–C52, C45–C59, C63–C68, C74–C89, C83–C95, C88–C102, C106–C111, C117–C132, C126–C138, C131–C145, C149–C154, C160–C175, C169–C181, C174–C188, and C192–C197. Position 38-40 (M38–C40) interacts with substrate. S90–Y101 is a binding site for substrate. S142–E143 lines the substrate pocket. The propeptide occupies D202–V227. The N-linked (GlcNAc...) asparagine glycan is linked to N211.

In terms of tissue distribution, confined to root caps, several cell layers at the periphery of the coleorhiza and radicle, and in all cell layers of the coleoptile.

Its function is as follows. N-acetyl-D-glucosamine binding lectin. The polypeptide is Lectin (Oryza sativa subsp. japonica (Rice)).